A 559-amino-acid polypeptide reads, in one-letter code: Sporulation protein kinase mde3 (559 aa).

One can recognise a Protein kinase domain in the interval 21 to 323 (YLVKQKLGDG…TAKYCKEVFF (303 aa)). Residues 27-35 (LGDGSFGTV) and Lys53 contribute to the ATP site. Residue Asp150 is the Proton acceptor of the active site.

This sequence belongs to the protein kinase superfamily. Ser/Thr protein kinase family.

The catalysed reaction is L-seryl-[protein] + ATP = O-phospho-L-seryl-[protein] + ADP + H(+). It carries out the reaction L-threonyl-[protein] + ATP = O-phospho-L-threonyl-[protein] + ADP + H(+). Its function is as follows. Protein kinase which is essential for spore formation. This is Sporulation protein kinase mde3 (mde3) from Schizosaccharomyces pombe (strain 972 / ATCC 24843) (Fission yeast).